The primary structure comprises 140 residues: Cysteine desulfuration protein SufE (140 aa).

Cys51 (cysteine persulfide intermediate) is an active-site residue.

This sequence belongs to the SufE family. In terms of assembly, homodimer. Interacts with SufS.

Its subcellular location is the cytoplasm. The protein operates within cofactor biosynthesis; iron-sulfur cluster biosynthesis. Functionally, participates in cysteine desulfuration mediated by SufS. Cysteine desulfuration mobilizes sulfur from L-cysteine to yield L-alanine and constitutes an essential step in sulfur metabolism for biosynthesis of a variety of sulfur-containing biomolecules. Functions as a sulfur acceptor for SufS, by mediating the direct transfer of the sulfur atom from the S-sulfanylcysteine of SufS, an intermediate product of cysteine desulfuration process. The protein is Cysteine desulfuration protein SufE of Yersinia enterocolitica serotype O:8 / biotype 1B (strain NCTC 13174 / 8081).